The sequence spans 221 residues: Urease accessory protein UreF (221 aa).

This sequence belongs to the UreF family. As to quaternary structure, ureD, UreF and UreG form a complex that acts as a GTP-hydrolysis-dependent molecular chaperone, activating the urease apoprotein by helping to assemble the nickel containing metallocenter of UreC. The UreE protein probably delivers the nickel.

The protein localises to the cytoplasm. Its function is as follows. Required for maturation of urease via the functional incorporation of the urease nickel metallocenter. This Aliivibrio fischeri (strain MJ11) (Vibrio fischeri) protein is Urease accessory protein UreF.